Here is a 116-residue protein sequence, read N- to C-terminus: Ribonuclease P protein component (116 aa).

It belongs to the RnpA family. Consists of a catalytic RNA component (M1 or rnpB) and a protein subunit.

The enzyme catalyses Endonucleolytic cleavage of RNA, removing 5'-extranucleotides from tRNA precursor.. Functionally, RNaseP catalyzes the removal of the 5'-leader sequence from pre-tRNA to produce the mature 5'-terminus. It can also cleave other RNA substrates such as 4.5S RNA. The protein component plays an auxiliary but essential role in vivo by binding to the 5'-leader sequence and broadening the substrate specificity of the ribozyme. In Geobacter sp. (strain M21), this protein is Ribonuclease P protein component.